The following is a 356-amino-acid chain: Transcription factor ATOH1 (356 aa).

The segment covering 1 to 21 (MSRLLHAEEWAEVKELGDHHR) has biased composition (basic and acidic residues). Disordered stretches follow at residues 1-56 (MSRL…PELS) and 92-125 (SEAA…GPVK). Positions 26-40 (HHLPQPPPPPPPQPP) are enriched in pro residues. The segment covering 96–109 (APRDEVDGRGELVR) has biased composition (basic and acidic residues). Low complexity predominate over residues 110 to 124 (RSSGGASSSKSPGPV). Positions 161–213 (QRRLAANARERRRMHGLNHAFDQLRNVIPSFNNDKKLSKYETLQMAQIYINAL) constitute a bHLH domain. Disordered stretches follow at residues 218 to 279 (QTPS…TRFS) and 314 to 356 (SPSL…DEAS). The span at 252–266 (NATAAGAQQASGGSQ) shows a compositional bias: low complexity. The span at 337–356 (HRSDGEFSPHSHYSDSDEAS) shows a compositional bias: basic and acidic residues.

As to quaternary structure, efficient DNA binding requires dimerization with another bHLH protein.

The protein resides in the nucleus. Transcriptional regulator. Activates E box-dependent transcription in collaboration with TCF3/E47, but the activity is completely antagonized by the negative regulator of neurogenesis HES1. Plays a role in the differentiation of subsets of neural cells by activating E box-dependent transcription. The sequence is that of Transcription factor ATOH1 from Pan troglodytes (Chimpanzee).